We begin with the raw amino-acid sequence, 394 residues long: MTRLETRTEPMVLNMGPHHPSMHGVLRLIMTLDGEDVVDCEPVIGYLHRGMEKIAENRTNVMYVPYVSRWDYAAGMFNEAVTVNAPEKLAGVAVPKRASYIRVIMLELNRIANHLLWFGPFLADVGAQTPFFYQFREREMIYDLWEAATGYRMVNNNYFRVGGVAADLPYGWVDKCLEFCDYLLPKVDEYERLVTDNPIFRRRVEGIGTITREEAINWGLSGPMLRASGVQWDLRKVDHYECYDDFDWDVQWETAGDCFARYVVRMREMRESVKIIRQAIKGLPGGPYENLEAKRLAAGKKSEWDAFDYQFIGKKVSPTFKIPKGEIYARVESGKGELGIYLVGDDNVFPARWKIRAADFNNLQIVPHLLRGMKVADIVVILGSVDVIMGSVDR.

This sequence belongs to the complex I 49 kDa subunit family. In terms of assembly, NDH-1 can be composed of about 15 different subunits; different subcomplexes with different compositions have been identified which probably have different functions.

It localises to the cellular thylakoid membrane. The enzyme catalyses a plastoquinone + NADH + (n+1) H(+)(in) = a plastoquinol + NAD(+) + n H(+)(out). The catalysed reaction is a plastoquinone + NADPH + (n+1) H(+)(in) = a plastoquinol + NADP(+) + n H(+)(out). Functionally, NDH-1 shuttles electrons from an unknown electron donor, via FMN and iron-sulfur (Fe-S) centers, to quinones in the respiratory and/or the photosynthetic chain. The immediate electron acceptor for the enzyme in this species is believed to be plastoquinone. Couples the redox reaction to proton translocation, and thus conserves the redox energy in a proton gradient. Cyanobacterial NDH-1 also plays a role in inorganic carbon-concentration. This Nostoc punctiforme (strain ATCC 29133 / PCC 73102) protein is NAD(P)H-quinone oxidoreductase subunit H.